Here is a 298-residue protein sequence, read N- to C-terminus: uncharacterized protein (298 aa).

Residues Met1–Met17 show a composition bias toward basic and acidic residues. Residues Met1–Gln22 are disordered. One can recognise an S1 motif domain in the interval Asn167–Leu227.

This is an uncharacterized protein from Bacillus subtilis (strain 168).